A 360-amino-acid polypeptide reads, in one-letter code: DNA replication and repair protein RecF (360 aa).

Residue 33–40 (GENGSGKT) coordinates ATP.

This sequence belongs to the RecF family.

The protein resides in the cytoplasm. The RecF protein is involved in DNA metabolism; it is required for DNA replication and normal SOS inducibility. RecF binds preferentially to single-stranded, linear DNA. It also seems to bind ATP. This is DNA replication and repair protein RecF from Rickettsia conorii (strain ATCC VR-613 / Malish 7).